Reading from the N-terminus, the 222-residue chain is Uracil-DNA glycosylase (222 aa).

The active-site Proton acceptor is the D61.

It belongs to the uracil-DNA glycosylase (UDG) superfamily. UNG family.

It localises to the cytoplasm. The catalysed reaction is Hydrolyzes single-stranded DNA or mismatched double-stranded DNA and polynucleotides, releasing free uracil.. Excises uracil residues from the DNA which can arise as a result of misincorporation of dUMP residues by DNA polymerase or due to deamination of cytosine. In Aeromonas hydrophila subsp. hydrophila (strain ATCC 7966 / DSM 30187 / BCRC 13018 / CCUG 14551 / JCM 1027 / KCTC 2358 / NCIMB 9240 / NCTC 8049), this protein is Uracil-DNA glycosylase.